A 426-amino-acid polypeptide reads, in one-letter code: Inhibin beta A chain (426 aa).

A signal peptide spans 1–20 (MPLLWLRGFLLASCWIIVRS). A propeptide spanning residues 21-310 (SPTPGSEGHS…EDHPHRRRRR (290 aa)) is cleaved from the precursor. An N-linked (GlcNAc...) asparagine glycan is attached at N165. A disordered region spans residues 259–288 (KKKKKEEEGEGKKKGGGEGGAGADEEKEQS). Residues 263-274 (KEEEGEGKKKGG) are compositionally biased toward basic and acidic residues. 4 disulfide bridges follow: C314/C322, C321/C391, C350/C423, and C354/C425.

Belongs to the TGF-beta family. Dimeric, linked by one or more disulfide bonds. Inhibin A is a dimer of alpha/INHA and beta-A/INHBA. Activin A is a homodimer of beta-A/INHBA. Activin AB is a dimer of beta-A/INHBA and beta-B/INHBB. Interacts with FST and FSTL3; these interactions prevent activin A interaction to its type II receptor. Activin A interacts with ACVR2A. Activin A interacts with BMPR2. Inhibin A interacts with ACVR1; this interaction creates a non-signaling complex (NSC) that inhibits ACVR1-mediated BMP signaling. Inhibin A interacts with ACVR2A.

The protein localises to the secreted. Functionally, inhibins/activins are involved in regulating a number of diverse functions such as hypothalamic and pituitary hormone secretion, gonadal hormone secretion, germ cell development and maturation, erythroid differentiation, insulin secretion, nerve cell survival, embryonic axial development or bone growth, depending on their subunit composition. Activin A is a homodimer of INHBA that plays a role in several essential biological processes including embryonic development, stem cell maintenance and differentiation, haematopoiesis, cell proliferation and tissue fibrosis. Signals through type I (such as ACVR1B or ACVR1C) and type II receptors (such as ACVR2A, ACVR2B or BMPR2) which, upon ligand binding, phosphorylate SMAD2 and SMAD3 intracellular signaling mediators that form a complex with SMAD4, translocate to the nucleus and modulate gene expression. Can also activate alternative non-canonical intracellular signaling pathways including the p38 MAPK, extracellular signal-regulated kinases 1/2 (ERK1/2) and c-Jun N-terminal kinases (JNKs) to modulate cell migration and differentiation. Alternatively, promotes osteoblastic differentiation via ACVRL1-SMAD1/5/9 pathway. In addition, can engage the type I receptor ACVR1 to form an ACVR1-activin A-type II receptor non-signaling complex (NSC) that renders receptors unavailable for engagement with BMPs, hence resulting in an apparent inhibition of ACVR1-mediated BMP signaling. Its function is as follows. Inhibin A is a dimer of alpha/INHA and beta-A/INHBA that functions as a feedback regulator in the hypothalamic-pituitary-gonadal (HPG) axis. Inhibits the secretion of FSH from the anterior pituitary gland by acting on pituitary gonadotrope cells. Antagonizes activin A by binding to the proteoglycan, betaglycan, and forming a stable complex with and, thereby, sequestering type II activin receptors while excluding type I receptor. The polypeptide is Inhibin beta A chain (INHBA) (Homo sapiens (Human)).